We begin with the raw amino-acid sequence, 301 residues long: Ribosomal protein L11 methyltransferase (301 aa).

Threonine 146, glycine 167, aspartate 189, and asparagine 237 together coordinate S-adenosyl-L-methionine.

It belongs to the methyltransferase superfamily. PrmA family.

Its subcellular location is the cytoplasm. It catalyses the reaction L-lysyl-[protein] + 3 S-adenosyl-L-methionine = N(6),N(6),N(6)-trimethyl-L-lysyl-[protein] + 3 S-adenosyl-L-homocysteine + 3 H(+). Methylates ribosomal protein L11. The polypeptide is Ribosomal protein L11 methyltransferase (Prochlorococcus marinus (strain MIT 9303)).